A 520-amino-acid chain; its full sequence is Cholesterol side-chain cleavage enzyme, mitochondrial (520 aa).

The N-terminal 36 residues, 1-36, are a transit peptide targeting the mitochondrion; sequence MLAKGLSLRSVLAKGCQPFLSPTWQSSVLATGGGAN. Cys458 contacts heme.

The protein belongs to the cytochrome P450 family. In terms of assembly, interacts with FDX1/adrenodoxin. The cofactor is heme.

The protein localises to the mitochondrion inner membrane. It catalyses the reaction 6 reduced [adrenodoxin] + cholesterol + 3 O2 + 6 H(+) = 4-methylpentanal + pregnenolone + 6 oxidized [adrenodoxin] + 4 H2O. The catalysed reaction is 2 reduced [adrenodoxin] + cholesterol + O2 + 2 H(+) = (22R)-hydroxycholesterol + 2 oxidized [adrenodoxin] + H2O. It carries out the reaction (22R)-hydroxycholesterol + 2 reduced [adrenodoxin] + O2 + 2 H(+) = (20R,22R)-20,22-dihydroxycholesterol + 2 oxidized [adrenodoxin] + H2O. The enzyme catalyses (20R,22R)-20,22-dihydroxycholesterol + 2 reduced [adrenodoxin] + O2 + 2 H(+) = 4-methylpentanal + pregnenolone + 2 oxidized [adrenodoxin] + 2 H2O. It functions in the pathway lipid metabolism; C21-steroid hormone metabolism. It participates in steroid metabolism; cholesterol metabolism. Its function is as follows. A cytochrome P450 monooxygenase that catalyzes the side-chain hydroxylation and cleavage of cholesterol to pregnenolone, the precursor of most steroid hormones. Catalyzes three sequential oxidation reactions of cholesterol, namely the hydroxylation at C22 followed with the hydroxylation at C20 to yield 20R,22R-hydroxycholesterol that is further cleaved between C20 and C22 to yield the C21-steroid pregnenolone and 4-methylpentanal. Mechanistically, uses molecular oxygen inserting one oxygen atom into a substrate and reducing the second into a water molecule. Two electrons are provided by NADPH via a two-protein mitochondrial transfer system comprising flavoprotein FDXR (adrenodoxin/ferredoxin reductase) and nonheme iron-sulfur protein FDX1 or FDX2 (adrenodoxin/ferredoxin). The chain is Cholesterol side-chain cleavage enzyme, mitochondrial (CYP11A1) from Mesocricetus auratus (Golden hamster).